The sequence spans 434 residues: uncharacterized protein (434 aa).

A run of 5 helical transmembrane segments spans residues 27 to 47 (IFLL…QSVI), 64 to 84 (FYLS…FVNW), 244 to 264 (IILA…ATVL), 289 to 309 (VPVN…PSLL), and 387 to 407 (LILT…GAVF).

The protein belongs to the CbiQ family.

The protein resides in the cell membrane. This is an uncharacterized protein from Mycoplasma pneumoniae (strain ATCC 29342 / M129 / Subtype 1) (Mycoplasmoides pneumoniae).